The primary structure comprises 399 residues: Protein IQ-DOMAIN 25 (399 aa).

The Nuclear localization signal signature appears at 1 to 8; sequence MRKNLTKL. Calmodulin-binding regions lie at residues 81 to 91 and 99 to 110; these read KERRTHAIAVA and DAAVAAAKAAAA. 2 IQ domains span residues 130–158 and 159–181; these read EHRA…GVVK and IQAL…SMEA. 3 disordered regions span residues 198 to 219, 262 to 302, and 346 to 377; these read NGNA…ENRN, SPLS…SPAR, and LRSH…VRMQ. Polar residues predominate over residues 285–294; the sequence is KFPTAQSTPR.

It belongs to the IQD family. As to quaternary structure, binds to multiple calmodulin (CaM) in the presence of Ca(2+) and CaM-like proteins.

The protein localises to the nucleus. It is found in the cell membrane. May be involved in cooperative interactions with calmodulins or calmodulin-like proteins. Recruits calmodulin proteins to microtubules, thus being a potential scaffold in cellular signaling and trafficking. May associate with nucleic acids and regulate gene expression at the transcriptional or post-transcriptional level. This is Protein IQ-DOMAIN 25 from Arabidopsis thaliana (Mouse-ear cress).